A 323-amino-acid chain; its full sequence is MGLFDRGVQMLLTTVGAFAAFSLMTIAVGTDYWLYSRGVCKTKSVSENETSKKNEEVMTHSGLWRTCCLEGNFKGLCKQIDHFPEDADYEADTAEYFLRAVRASSIFPILSVILLFMGGLCIAASEFYKTRHNIILSAGIFFVSAGLSNIIGIIVYISANAGDPSKSDSKKNSYSYGWSFYFGALSFIIAEMVGVLAVHMFIDRHKQLRATARATDYLQASAITRIPSYRYRYQRRSRSSSRSTEPSHSRDASPVGVKGFNTLPSTEISMYTLSRDPLKAATTPTATYNSDRDNSFLQVHNCIQKDSKDSLHANTANRRTTPV.

A helical membrane pass occupies residues 10–30; it reads MLLTTVGAFAAFSLMTIAVGT. A glycan (N-linked (GlcNAc...) asparagine) is linked at asparagine 48. 3 consecutive transmembrane segments (helical) span residues 104-124, 134-154, and 182-202; these read SSIF…CIAA, IILS…IGII, and FGAL…HMFI. A disordered region spans residues 233–261; the sequence is YQRRSRSSSRSTEPSHSRDASPVGVKGFN. Serine 253 is subject to Phosphoserine. At tyrosine 271 the chain carries Phosphotyrosine. Threonine 321 carries the post-translational modification Phosphothreonine; by PKA.

Belongs to the PMP-22/EMP/MP20 family. CACNG subfamily. As to quaternary structure, the L-type calcium channel is composed of five subunits: alpha-1, alpha-2/delta, beta and gamma. Interacts with the PDZ domains of DLG4/PSD-95 and DLG1/SAP97. May interact with GOPC. Acts as an auxiliary subunit for AMPA-selective glutamate receptors (AMPARs). Found in a complex with GRIA1, GRIA2, GRIA3, GRIA4, CNIH2, CNIH3, CACNG3, CACNG4, CACNG5, CACNG7 and CACNG8. Interacts with GRIA1 and GRIA2. Interacts with MPP2. Phosphorylation of Thr-321 by PKA impairs interaction with DLG1 and DLG4. In terms of tissue distribution, brain.

It is found in the membrane. The protein localises to the synapse. Its subcellular location is the synaptosome. Regulates the trafficking and gating properties of AMPA-selective glutamate receptors (AMPARs). Promotes their targeting to the cell membrane and synapses and modulates their gating properties by slowing their rates of activation, deactivation and desensitization. Does not show subunit-specific AMPA receptor regulation and regulates all AMPAR subunits. Thought to stabilize the calcium channel in an inactivated (closed) state. This chain is Voltage-dependent calcium channel gamma-2 subunit (Cacng2), found in Mus musculus (Mouse).